A 191-amino-acid polypeptide reads, in one-letter code: Neurotrophic factor BDNF precursor form (191 aa).

Residues 1 to 23 (GQGSLAYPGLRTQGNLETLGGPN) are disordered. A propeptide spanning residues 1–100 (GQGSLAYPGL…AANMSMRVRR (100 aa)) is cleaved from the precursor. Asn-93 is a glycosylation site (N-linked (GlcNAc...) asparagine). Cys-113 and Cys-180 form a disulfide bridge.

The protein belongs to the NGF-beta family.

It localises to the secreted. Functionally, promotes the survival of neuronal populations that are all located either in the central nervous system or directly connected to it. This chain is Neurotrophic factor BDNF precursor form (BDNF), found in Anilius scytale (Coral cylinder snake).